We begin with the raw amino-acid sequence, 142 residues long: Small ribosomal subunit protein bS18m (142 aa).

This sequence belongs to the bacterial ribosomal protein bS18 family. In terms of assembly, component of the mitochondrial small ribosomal subunit (mt-SSU). Mature mammalian 55S mitochondrial ribosomes consist of a small (28S) and a large (39S) subunit. The 28S small subunit contains a 12S ribosomal RNA (12S mt-rRNA) and 30 different proteins. The 39S large subunit contains a 16S rRNA (16S mt-rRNA), a copy of mitochondrial valine transfer RNA (mt-tRNA(Val)), which plays an integral structural role, and 52 different proteins. bS18m has a zinc binding site.

Its subcellular location is the mitochondrion. The sequence is that of Small ribosomal subunit protein bS18m (MRPS18C) from Homo sapiens (Human).